A 399-amino-acid chain; its full sequence is Tyrosine--tRNA ligase 2 (399 aa).

The 'HIGH' region motif lies at 41 to 50; it reads PTAPDLHLGH. Residues 225 to 229 carry the 'KMSKS' region motif; the sequence is KMSKS. Position 228 (lysine 228) interacts with ATP. The 63-residue stretch at 336–398 folds into the S4 RNA-binding domain; sequence ILIANLLKEA…GKRKFANITV (63 aa).

It belongs to the class-I aminoacyl-tRNA synthetase family. TyrS type 2 subfamily. Homodimer.

It localises to the cytoplasm. The enzyme catalyses tRNA(Tyr) + L-tyrosine + ATP = L-tyrosyl-tRNA(Tyr) + AMP + diphosphate + H(+). Its function is as follows. Catalyzes the attachment of tyrosine to tRNA(Tyr) in a two-step reaction: tyrosine is first activated by ATP to form Tyr-AMP and then transferred to the acceptor end of tRNA(Tyr). The polypeptide is Tyrosine--tRNA ligase 2 (Pseudoalteromonas translucida (strain TAC 125)).